The following is a 267-amino-acid chain: Membrane-spanning 4-domains subfamily A member 10 (267 aa).

Topologically, residues 1-56 are cytoplasmic; sequence MAGQAPTAVPGSVTGEVSRWQNLGPAQPAQKVAQPQNLVPDGHLEKALEGSDLLQK. Residues 57 to 77 form a helical membrane-spanning segment; it reads LGGFHIAIAFAHLAFGGYLIS. Residues 78–83 lie on the Extracellular side of the membrane; it reads TVKNLH. A helical transmembrane segment spans residues 84-104; it reads LVVLKCWYPLWGTVSFLVAGM. At 105 to 118 the chain is on the cytoplasmic side; it reads AAMTTVTFPKTSLK. Residues 119-139 form a helical membrane-spanning segment; it reads VLCVIANVISLFCALAGFFVI. The Extracellular portion of the chain corresponds to 140 to 168; sequence AKDLFLEGPFPWPIWRPYPEPTTYIQRLE. A helical membrane pass occupies residues 169–189; that stretch reads LTLFCFTFLEIFLSGSTAITA. Topologically, residues 190–267 are cytoplasmic; the sequence is YRMKRLQAED…LHTGPRTLRK (78 aa).

Belongs to the MS4A family. In terms of tissue distribution, expressed in thymus, kidney, colon, brain and testis. Expressed also by various hematopoietic and lymphoblastoid cell lines.

It localises to the membrane. May be involved in signal transduction as a component of a multimeric receptor complex. This is Membrane-spanning 4-domains subfamily A member 10 (Ms4a10) from Mus musculus (Mouse).